Here is a 267-residue protein sequence, read N- to C-terminus: Tryptophan synthase alpha chain (267 aa).

Residues Glu-47 and Asp-58 each act as proton acceptor in the active site.

The protein belongs to the TrpA family. Tetramer of two alpha and two beta chains.

The catalysed reaction is (1S,2R)-1-C-(indol-3-yl)glycerol 3-phosphate + L-serine = D-glyceraldehyde 3-phosphate + L-tryptophan + H2O. Its pathway is amino-acid biosynthesis; L-tryptophan biosynthesis; L-tryptophan from chorismate: step 5/5. Its function is as follows. The alpha subunit is responsible for the aldol cleavage of indoleglycerol phosphate to indole and glyceraldehyde 3-phosphate. This is Tryptophan synthase alpha chain from Chlorobaculum parvum (strain DSM 263 / NCIMB 8327) (Chlorobium vibrioforme subsp. thiosulfatophilum).